A 156-amino-acid chain; its full sequence is Small ribosomal subunit protein uS7 (156 aa).

The protein belongs to the universal ribosomal protein uS7 family. Part of the 30S ribosomal subunit. Contacts proteins S9 and S11.

Functionally, one of the primary rRNA binding proteins, it binds directly to 16S rRNA where it nucleates assembly of the head domain of the 30S subunit. Is located at the subunit interface close to the decoding center, probably blocks exit of the E-site tRNA. In Clavibacter sepedonicus (Clavibacter michiganensis subsp. sepedonicus), this protein is Small ribosomal subunit protein uS7.